A 172-amino-acid polypeptide reads, in one-letter code: C-phycocyanin-2 beta subunit (172 aa).

Asparagine 72 bears the N4-methylasparagine mark. Residues cysteine 82 and cysteine 153 each coordinate (2R,3E)-phycocyanobilin.

This sequence belongs to the phycobiliprotein family. In terms of assembly, heterodimer of an alpha and a beta subunit, which further assembles into trimers and the trimers into hexamers. Post-translationally, contains two covalently linked bilin chromophores.

Its subcellular location is the cellular thylakoid membrane. In terms of biological role, light-harvesting photosynthetic bile pigment-protein from the phycobiliprotein complex (phycobilisome, PBS). Phycocyanin is the major phycobiliprotein in the PBS rod. This Microchaete diplosiphon (Fremyella diplosiphon) protein is C-phycocyanin-2 beta subunit (cpcB2).